We begin with the raw amino-acid sequence, 933 residues long: Phosphoenolpyruvate carboxylase (933 aa).

Residues His158 and Lys592 contribute to the active site.

The protein belongs to the PEPCase type 1 family. It depends on Mg(2+) as a cofactor.

The catalysed reaction is oxaloacetate + phosphate = phosphoenolpyruvate + hydrogencarbonate. Functionally, forms oxaloacetate, a four-carbon dicarboxylic acid source for the tricarboxylic acid cycle. This Nitrosomonas europaea (strain ATCC 19718 / CIP 103999 / KCTC 2705 / NBRC 14298) protein is Phosphoenolpyruvate carboxylase.